A 160-amino-acid polypeptide reads, in one-letter code: Cyanate hydratase (160 aa).

Active-site residues include arginine 100, glutamate 103, and serine 126.

It belongs to the cyanase family.

It catalyses the reaction cyanate + hydrogencarbonate + 3 H(+) = NH4(+) + 2 CO2. In terms of biological role, catalyzes the reaction of cyanate with bicarbonate to produce ammonia and carbon dioxide. The polypeptide is Cyanate hydratase (Aspergillus niger (strain ATCC MYA-4892 / CBS 513.88 / FGSC A1513)).